Consider the following 698-residue polypeptide: Polyribonucleotide nucleotidyltransferase (698 aa).

2 residues coordinate Mg(2+): D490 and D496. A KH domain is found at 557-616; that stretch reads PKVVTMTIKPDKIRDVIGPGGKKINEIIDETGVKLDIEQDGTIFIGAVDQAMINRAREII. The S1 motif domain maps to 626 to 694; the sequence is GQTYQATVKR…KQGRVNASHR (69 aa).

Belongs to the polyribonucleotide nucleotidyltransferase family. Mg(2+) serves as cofactor.

It localises to the cytoplasm. The catalysed reaction is RNA(n+1) + phosphate = RNA(n) + a ribonucleoside 5'-diphosphate. Its function is as follows. Involved in mRNA degradation. Catalyzes the phosphorolysis of single-stranded polyribonucleotides processively in the 3'- to 5'-direction. This chain is Polyribonucleotide nucleotidyltransferase, found in Staphylococcus aureus (strain bovine RF122 / ET3-1).